The sequence spans 129 residues: uncharacterized protein (129 aa).

An N-terminal signal peptide occupies residues 1–21; sequence MAQNKTIAVALLLATLVAVMG.

This is an uncharacterized protein from Oryza sativa subsp. japonica (Rice).